The chain runs to 481 residues: 6-phosphogluconate dehydrogenase, decarboxylating (481 aa).

NADP(+)-binding positions include 11-16 (GLAVMG), 34-36 (NRT), 76-78 (VKG), and Asn-104. Residues Asn-104 and 130 to 132 (SGG) contribute to the substrate site. The active-site Proton acceptor is the Lys-184. Residue 187–188 (HN) coordinates substrate. Glu-191 acts as the Proton donor in catalysis. Positions 192, 259, 286, 445, and 451 each coordinate substrate.

This sequence belongs to the 6-phosphogluconate dehydrogenase family. In terms of assembly, homodimer.

The enzyme catalyses 6-phospho-D-gluconate + NADP(+) = D-ribulose 5-phosphate + CO2 + NADPH. Its pathway is carbohydrate degradation; pentose phosphate pathway; D-ribulose 5-phosphate from D-glucose 6-phosphate (oxidative stage): step 3/3. Catalyzes the oxidative decarboxylation of 6-phosphogluconate to ribulose 5-phosphate and CO(2), with concomitant reduction of NADP to NADPH. This is 6-phosphogluconate dehydrogenase, decarboxylating (Pgd) from Drosophila simulans (Fruit fly).